A 95-amino-acid polypeptide reads, in one-letter code: Protein TusB (95 aa).

The protein belongs to the DsrH/TusB family. In terms of assembly, heterohexamer, formed by a dimer of trimers. The hexameric TusBCD complex contains 2 copies each of TusB, TusC and TusD. The TusBCD complex interacts with TusE.

The protein resides in the cytoplasm. Its function is as follows. Part of a sulfur-relay system required for 2-thiolation of 5-methylaminomethyl-2-thiouridine (mnm(5)s(2)U) at tRNA wobble positions. This chain is Protein TusB, found in Escherichia coli O45:K1 (strain S88 / ExPEC).